The primary structure comprises 106 residues: Glycoprotein GP16 (106 aa).

Glycosylated.

It localises to the host cytoplasm. Its function is as follows. May be involved in formation or transport of the nucleocapsid-containing vesicles around the nuclear membrane. This chain is Glycoprotein GP16 (GP16), found in Autographa californica nuclear polyhedrosis virus (AcMNPV).